The following is a 446-amino-acid chain: Sterile alpha motif domain-containing protein 7 (446 aa).

Residues 94-168 (HTARTEMEMY…NLQGNPMLAA (75 aa)) are required for localization to nuclear polycomb bodies. Disordered stretches follow at residues 187–207 (NTGNQKALDSDAESSKSQAEE) and 225–277 (KDPD…AWDD). The span at 232–249 (PSNQKSSETNEKPTTALA) shows a compositional bias: polar residues. An SAM domain is found at 327–392 (WTVDDVHSFI…SQVSQHVGSM (66 aa)).

As to quaternary structure, monomer, homodimer and homooligomer. Component of a Polycomb group (PcG) multiprotein PRC1-like complex. Interacts with PHC2, NR2E3 and SAMD11. Interacts with RNF1 in a PHC2-dependent manner. In terms of tissue distribution, expressed in the retina (at protein level). Expressed in the retinal inner and outer nuclear layers.

The protein resides in the nucleus. The protein localises to the cytoplasm. Functionally, component of a Polycomb group (PcG) multiprotein PRC1-like complex, essential for establishing rod photoreceptor cell identity and function by silencing nonrod gene expression in developing rod photoreceptor cells. Via its association with the PRC1-like complex, promotes epigenetic repressive marks H3K27me3 and H2AK119ub marks in nonrod genes, silencing their transcription. Represses Crx-controlled photoreceptor-specific gene expression. This Homo sapiens (Human) protein is Sterile alpha motif domain-containing protein 7 (SAMD7).